The primary structure comprises 206 residues: GTP cyclohydrolase 1 (206 aa).

Positions 97, 100, and 168 each coordinate Zn(2+).

Belongs to the GTP cyclohydrolase I family. In terms of assembly, toroid-shaped homodecamer, composed of two pentamers of five dimers.

The enzyme catalyses GTP + H2O = 7,8-dihydroneopterin 3'-triphosphate + formate + H(+). It participates in cofactor biosynthesis; 7,8-dihydroneopterin triphosphate biosynthesis; 7,8-dihydroneopterin triphosphate from GTP: step 1/1. The polypeptide is GTP cyclohydrolase 1 (Chromobacterium violaceum (strain ATCC 12472 / DSM 30191 / JCM 1249 / CCUG 213 / NBRC 12614 / NCIMB 9131 / NCTC 9757 / MK)).